A 493-amino-acid chain; its full sequence is Acetyl-coenzyme A carboxylase carboxyl transferase subunit beta (493 aa).

The region spanning 231-493 (LWVQCENCYG…FKLHAFFPLN (263 aa)) is the CoA carboxyltransferase N-terminal domain. Residues C235, C238, C254, and C257 each coordinate Zn(2+). The C4-type zinc finger occupies 235 to 257 (CENCYGLNYKKFLKSKINLCEQC).

It belongs to the AccD/PCCB family. In terms of assembly, acetyl-CoA carboxylase is a heterohexamer composed of biotin carboxyl carrier protein, biotin carboxylase and 2 subunits each of ACCase subunit alpha and ACCase plastid-coded subunit beta (accD). Zn(2+) serves as cofactor.

Its subcellular location is the plastid stroma. The catalysed reaction is N(6)-carboxybiotinyl-L-lysyl-[protein] + acetyl-CoA = N(6)-biotinyl-L-lysyl-[protein] + malonyl-CoA. Its pathway is lipid metabolism; malonyl-CoA biosynthesis; malonyl-CoA from acetyl-CoA: step 1/1. Functionally, component of the acetyl coenzyme A carboxylase (ACC) complex. Biotin carboxylase (BC) catalyzes the carboxylation of biotin on its carrier protein (BCCP) and then the CO(2) group is transferred by the transcarboxylase to acetyl-CoA to form malonyl-CoA. The protein is Acetyl-coenzyme A carboxylase carboxyl transferase subunit beta of Epifagus virginiana (Beechdrops).